The sequence spans 319 residues: Acetyl-coenzyme A carboxylase carboxyl transferase subunit alpha (319 aa).

Residues 35–296 (DLDKEIEQLE…KATLLRQLED (262 aa)) form the CoA carboxyltransferase C-terminal domain.

The protein belongs to the AccA family. Acetyl-CoA carboxylase is a heterohexamer composed of biotin carboxyl carrier protein (AccB), biotin carboxylase (AccC) and two subunits each of ACCase subunit alpha (AccA) and ACCase subunit beta (AccD).

Its subcellular location is the cytoplasm. The enzyme catalyses N(6)-carboxybiotinyl-L-lysyl-[protein] + acetyl-CoA = N(6)-biotinyl-L-lysyl-[protein] + malonyl-CoA. It functions in the pathway lipid metabolism; malonyl-CoA biosynthesis; malonyl-CoA from acetyl-CoA: step 1/1. Functionally, component of the acetyl coenzyme A carboxylase (ACC) complex. First, biotin carboxylase catalyzes the carboxylation of biotin on its carrier protein (BCCP) and then the CO(2) group is transferred by the carboxyltransferase to acetyl-CoA to form malonyl-CoA. This Vibrio parahaemolyticus serotype O3:K6 (strain RIMD 2210633) protein is Acetyl-coenzyme A carboxylase carboxyl transferase subunit alpha.